We begin with the raw amino-acid sequence, 360 residues long: uncharacterized protein (360 aa).

Transmembrane regions (helical) follow at residues 12–32 (ILPL…ITQI), 52–72 (VVLV…VIAV), 96–116 (IQLA…AYYI), 278–298 (IIWP…FLRY), 306–326 (FMPV…HFIL), and 336–356 (FIFA…YLLV).

The protein resides in the cell membrane. This is an uncharacterized protein from Rickettsia prowazekii (strain Madrid E).